Here is a 171-residue protein sequence, read N- to C-terminus: ATP synthase subunit b (171 aa).

A helical membrane pass occupies residues G10–I30.

This sequence belongs to the ATPase B chain family. In terms of assembly, F-type ATPases have 2 components, F(1) - the catalytic core - and F(0) - the membrane proton channel. F(1) has five subunits: alpha(3), beta(3), gamma(1), delta(1), epsilon(1). F(0) has three main subunits: a(1), b(2) and c(10-14). The alpha and beta chains form an alternating ring which encloses part of the gamma chain. F(1) is attached to F(0) by a central stalk formed by the gamma and epsilon chains, while a peripheral stalk is formed by the delta and b chains.

The protein resides in the cell membrane. F(1)F(0) ATP synthase produces ATP from ADP in the presence of a proton or sodium gradient. F-type ATPases consist of two structural domains, F(1) containing the extramembraneous catalytic core and F(0) containing the membrane proton channel, linked together by a central stalk and a peripheral stalk. During catalysis, ATP synthesis in the catalytic domain of F(1) is coupled via a rotary mechanism of the central stalk subunits to proton translocation. Its function is as follows. Component of the F(0) channel, it forms part of the peripheral stalk, linking F(1) to F(0). The sequence is that of ATP synthase subunit b from Levilactobacillus brevis (strain ATCC 367 / BCRC 12310 / CIP 105137 / JCM 1170 / LMG 11437 / NCIMB 947 / NCTC 947) (Lactobacillus brevis).